We begin with the raw amino-acid sequence, 200 residues long: Translation machinery-associated protein 22 (200 aa).

The region spanning V106–H177 is the SUI1 domain.

It belongs to the DENR family. In terms of assembly, interacts with the 40S ribosomal subunit.

The protein resides in the cytoplasm. The protein is Translation machinery-associated protein 22 (TMA22) of Coccidioides immitis (strain RS) (Valley fever fungus).